Consider the following 295-residue polypeptide: Pyridoxal 5'-phosphate synthase subunit PdxS (295 aa).

A D-ribose 5-phosphate-binding site is contributed by aspartate 25. The active-site Schiff-base intermediate with D-ribose 5-phosphate is lysine 82. Position 154 (glycine 154) interacts with D-ribose 5-phosphate. A D-glyceraldehyde 3-phosphate-binding site is contributed by arginine 166. Residues glycine 215 and 236–237 (GS) each bind D-ribose 5-phosphate.

This sequence belongs to the PdxS/SNZ family. In the presence of PdxT, forms a dodecamer of heterodimers.

The enzyme catalyses aldehydo-D-ribose 5-phosphate + D-glyceraldehyde 3-phosphate + L-glutamine = pyridoxal 5'-phosphate + L-glutamate + phosphate + 3 H2O + H(+). Its pathway is cofactor biosynthesis; pyridoxal 5'-phosphate biosynthesis. Functionally, catalyzes the formation of pyridoxal 5'-phosphate from ribose 5-phosphate (RBP), glyceraldehyde 3-phosphate (G3P) and ammonia. The ammonia is provided by the PdxT subunit. Can also use ribulose 5-phosphate and dihydroxyacetone phosphate as substrates, resulting from enzyme-catalyzed isomerization of RBP and G3P, respectively. The protein is Pyridoxal 5'-phosphate synthase subunit PdxS of Shouchella clausii (strain KSM-K16) (Alkalihalobacillus clausii).